We begin with the raw amino-acid sequence, 118 residues long: NADH-quinone oxidoreductase subunit A (118 aa).

The next 3 helical transmembrane spans lie at 8-28 (ILIF…LNYL), 61-81 (FMYA…YPWA), and 86-106 (VLGL…VLGL).

The protein belongs to the complex I subunit 3 family. NDH-1 is composed of 14 different subunits. Subunits NuoA, H, J, K, L, M, N constitute the membrane sector of the complex.

It is found in the cell membrane. It carries out the reaction a quinone + NADH + 5 H(+)(in) = a quinol + NAD(+) + 4 H(+)(out). Functionally, NDH-1 shuttles electrons from NADH, via FMN and iron-sulfur (Fe-S) centers, to quinones in the respiratory chain. The immediate electron acceptor for the enzyme in this species is believed to be a menaquinone. Couples the redox reaction to proton translocation (for every two electrons transferred, four hydrogen ions are translocated across the cytoplasmic membrane), and thus conserves the redox energy in a proton gradient. This Carboxydothermus hydrogenoformans (strain ATCC BAA-161 / DSM 6008 / Z-2901) protein is NADH-quinone oxidoreductase subunit A.